Reading from the N-terminus, the 503-residue chain is MKIKTDEITSVLKQEILNYKKDLGVEEVGTVLEIGDGIARVFGLKNVMSGEMVEFQNGIFGQAFNLEDNSVGVVVYGNYLDIQEGFSVKRTNRILEVPVGPELLGRVVNPLGEPIDGKGPINAKLTRPVESPAPGIAMRQPVGEPMQTGIKAIDAMIPIGRGQRELIIGDRGTGKTSIALDTILNQKGTGVICVYVAIGQKASTVASTVEMLRNKGALEYTIVVSATAADPAPLQYIAPYSGCSMAEYFMYNEKKATLVVYDDLSKQAVAYRQMSLLLRRPPGREAYPGDVFYLHSRLLERAAKLDDKYGAGSLTALPIIETQEGEVSAYIPTNVISITDGQIYLQSNLFASGNRPAVDVGISVSRVGSAAQIKAMKQVAGKMKLELAQFRDLEAFAQLGTELDPATQAQLDRGNRIVQMLKQPVSSPYPVEEQVVEIFAVTRGFMDKIPVAKVQEYGKYLLNTIKEQYSEVLDSIRKEKKISDEEKLGEVLSKVAEEFLRKH.

ATP is bound at residue glycine 169–threonine 176.

This sequence belongs to the ATPase alpha/beta chains family. In terms of assembly, F-type ATPases have 2 components, CF(1) - the catalytic core - and CF(0) - the membrane proton channel. CF(1) has five subunits: alpha(3), beta(3), gamma(1), delta(1), epsilon(1). CF(0) has three main subunits: a(1), b(2) and c(9-12). The alpha and beta chains form an alternating ring which encloses part of the gamma chain. CF(1) is attached to CF(0) by a central stalk formed by the gamma and epsilon chains, while a peripheral stalk is formed by the delta and b chains.

Its subcellular location is the cell inner membrane. The enzyme catalyses ATP + H2O + 4 H(+)(in) = ADP + phosphate + 5 H(+)(out). In terms of biological role, produces ATP from ADP in the presence of a proton gradient across the membrane. The alpha chain is a regulatory subunit. This is ATP synthase subunit alpha from Leptospira interrogans serogroup Icterohaemorrhagiae serovar copenhageni (strain Fiocruz L1-130).